The sequence spans 193 residues: Potassium-transporting ATPase KdpC subunit (193 aa).

Residues 8-28 form a helical membrane-spanning segment; it reads VVLLIFLTLITGVAYPLLATG.

This sequence belongs to the KdpC family. In terms of assembly, the system is composed of three essential subunits: KdpA, KdpB and KdpC.

The protein localises to the cell inner membrane. Its function is as follows. Part of the high-affinity ATP-driven potassium transport (or Kdp) system, which catalyzes the hydrolysis of ATP coupled with the electrogenic transport of potassium into the cytoplasm. This subunit acts as a catalytic chaperone that increases the ATP-binding affinity of the ATP-hydrolyzing subunit KdpB by the formation of a transient KdpB/KdpC/ATP ternary complex. The sequence is that of Potassium-transporting ATPase KdpC subunit from Photorhabdus laumondii subsp. laumondii (strain DSM 15139 / CIP 105565 / TT01) (Photorhabdus luminescens subsp. laumondii).